Reading from the N-terminus, the 345-residue chain is tRNA N6-adenosine threonylcarbamoyltransferase (345 aa).

The Fe cation site is built by histidine 111 and histidine 115. Residues leucine 134–glycine 138, aspartate 167, glycine 180, and asparagine 276 contribute to the substrate site. A Fe cation-binding site is contributed by aspartate 304.

It belongs to the KAE1 / TsaD family. The cofactor is Fe(2+).

The protein resides in the cytoplasm. The catalysed reaction is L-threonylcarbamoyladenylate + adenosine(37) in tRNA = N(6)-L-threonylcarbamoyladenosine(37) in tRNA + AMP + H(+). Its function is as follows. Required for the formation of a threonylcarbamoyl group on adenosine at position 37 (t(6)A37) in tRNAs that read codons beginning with adenine. Is involved in the transfer of the threonylcarbamoyl moiety of threonylcarbamoyl-AMP (TC-AMP) to the N6 group of A37, together with TsaE and TsaB. TsaD likely plays a direct catalytic role in this reaction. This is tRNA N6-adenosine threonylcarbamoyltransferase from Alcanivorax borkumensis (strain ATCC 700651 / DSM 11573 / NCIMB 13689 / SK2).